The sequence spans 492 residues: Serine incorporator 4 (492 aa).

A run of 10 helical transmembrane segments spans residues 59 to 79, 113 to 133, 148 to 168, 179 to 199, 219 to 239, 254 to 274, 281 to 301, 330 to 350, 421 to 441, and 464 to 484; these read YILL…KTVV, AVYR…VLLV, SFWS…FCIP, IGIC…TAFA, GVSL…VLLF, LLSL…APCI, SGLL…FSAL, IPDT…VLFA, GFHF…TNWF, and VASC…PLLA.

Belongs to the TDE1 family.

It localises to the membrane. Incorporates a polar amino acid serine into membranes and facilitates the synthesis of two serine-derived lipids, phosphatidylserine and sphingolipids. This chain is Serine incorporator 4 (Serinc4), found in Mus musculus (Mouse).